The primary structure comprises 742 residues: Two-component response regulator-like PRR37 (742 aa).

The region spanning K63–W181 is the Response regulatory domain. Residues S186 to G195 show a composition bias toward low complexity. 7 disordered regions span residues S186–K249, P290–N346, Q377–N402, M478–R517, F533–Q568, N590–M671, and N697–R742. Positions D236–T248 are enriched in polar residues. Basic and acidic residues predominate over residues K299 to E313. The segment covering R318–E330 has biased composition (polar residues). A compositionally biased stretch (basic and acidic residues) spans R331–E341. Residues G490–S502 show a composition bias toward low complexity. Over residues T503 to S512 the composition is skewed to polar residues. Residues N618–S634 are compositionally biased toward low complexity. Gly residues predominate over residues G656–S667. The region spanning R682–Q724 is the CCT domain. The span at N697–K708 shows a compositional bias: basic residues. Residues G719 to Q731 show a composition bias toward low complexity.

This sequence belongs to the ARR-like family.

It localises to the nucleus. Probable transcription factor involved in the regulation of flowering time under long day (LD) conditions. Functions as a repressor of flowering. Controls flowering time by negatively regulating the expression of HD3A. Acts downstream of the phytochrome B to repress the expression of EHD1, an activator of the flowering promoter genes HD3A and RFT1. Controls photoperiodic flowering response. Seems to be one of the component of the circadian clock. Expression of several members of the ARR-like family is controlled by circadian rhythm. The particular coordinated sequential expression of PRR73, PRR37, PRR95, PRR59 and PPR1 result to circadian waves that may be at the basis of the endogenous circadian clock. The chain is Two-component response regulator-like PRR37 from Oryza sativa subsp. japonica (Rice).